The sequence spans 310 residues: B3 domain-containing protein At4g02870 (310 aa).

The segment covering 1–21 has biased composition (polar residues); that stretch reads MTLSDDPISPSTQESSNSSYV. Positions 1-39 are disordered; the sequence is MTLSDDPISPSTQESSNSSYVRSKEAEKNSPSQETDEEV. Positions 205–300 form a DNA-binding region, TF-B3; the sequence is RCGRLILQSS…RLQFGVISRN (96 aa).

It is found in the nucleus. The protein is B3 domain-containing protein At4g02870 (ARF42) of Arabidopsis thaliana (Mouse-ear cress).